Here is a 471-residue protein sequence, read N- to C-terminus: Methyltransferase OMS1, mitochondrial (471 aa).

A mitochondrion-targeting transit peptide spans 1-39 (MIVFRRFPTCLLHHIRQPASRSLLLESQRRSLSFTSYKY). The Mitochondrial matrix segment spans residues 40–103 (NSSHIDDDKS…AIARSEKFSK (64 aa)). A helical membrane pass occupies residues 104 to 123 (GMTKYMIGAYVIFLIYGLFF). The Mitochondrial intermembrane segment spans residues 124 to 471 (TKKLFAKDKE…LEPVPPVSKS (348 aa)). A compositionally biased stretch (basic and acidic residues) spans 450-463 (FEKKDDMASKKELE). The interval 450–471 (FEKKDDMASKKELEPVPPVSKS) is disordered.

The protein belongs to the methyltransferase superfamily. METL family.

The protein resides in the mitochondrion inner membrane. Mitochondrial methyltransferase which suppresses respiratory defects caused by OXA1 mutations when overexpressed. In Saccharomyces cerevisiae (strain ATCC 204508 / S288c) (Baker's yeast), this protein is Methyltransferase OMS1, mitochondrial (OMS1).